The primary structure comprises 482 residues: CBL-interacting serine/threonine-protein kinase 23 (482 aa).

Positions 1–25 are enriched in low complexity; the sequence is MASRTTPSRSTPSRSTPSGSSSGGR. Residues 1–29 are disordered; that stretch reads MASRTTPSRSTPSRSTPSGSSSGGRTRVG. The 256-residue stretch at 31–286 folds into the Protein kinase domain; that stretch reads YELGRTLGEG…FAEVIENEWF (256 aa). ATP is bound by residues 37–45 and K60; that span reads LGEGTFAKV. D154 acts as the Proton acceptor in catalysis. An activation loop region spans residues 172–201; it reads DFGLSALPQQVREDGLLHTTCGTPNYVAPE. Phosphoserine is present on S176. T190 carries the post-translational modification Phosphothreonine. One can recognise an NAF domain in the interval 328-352; the sequence is KTPVTMNAFELISTSQGLNLGSLFE. The segment at 359–388 is PPI; the sequence is KRKTRFTSKSSANEIVTKIEAAAAPMGFDV. The disordered stretch occupies residues 459 to 482; sequence KEEGTDGGGTNGAMANRTIAKQST.

The protein belongs to the protein kinase superfamily. CAMK Ser/Thr protein kinase family. SNF1 subfamily. In terms of assembly, part of a K(+)-channel calcium-sensing kinase/phosphatase complex composed by a calcium sensor CBL (CBL1, CBL2, CBL3 or CBL9), a kinase CIPK (CIPK6, CIPK16 or CIPK23), a phosphatase PP2C (AIP1) and a K(+)-channel (AKT1). Interacts with AKT1, CBL1, CBL2, CBL3, CBL5, CBL8, CBL9 and NRT1.1. Requires Mn(2+) as cofactor. In terms of processing, autophosphorylated. In terms of tissue distribution, in seedlings, mostly in vascular bundles, and in roots, especially in cortex and endodermis cells. In adult plants, mostly expressed in flowers, and, to a lower extent, in roots, leaves, stems and siliques, particularly in vascular tissues. Also detected in guard cells and root hairs.

The protein resides in the cell membrane. The enzyme catalyses L-seryl-[protein] + ATP = O-phospho-L-seryl-[protein] + ADP + H(+). The catalysed reaction is L-threonyl-[protein] + ATP = O-phospho-L-threonyl-[protein] + ADP + H(+). Its function is as follows. CIPK serine-threonine protein kinases interact with CBL proteins. Binding of a CBL protein to the regulatory NAF domain of CIPK protein leads to activation of the kinase in a calcium-dependent manner. Downstream of CBL1, CBL2, CBL3 and CBL9, regulates by phosphorylation the K(+) conductance and uptake of AKT1 in low K(+) condition, in response to calcium signaling and during the stomatal opening regulation by monitoring the turgor pressure in guard cells. In response to low nitrate concentration, phosphorylates NRT1.1, switching it from a low-affinity nitrate transporter to a high-affinity transporter. Confers tolerance to low potassium conditions. Involved in drought sensitivity and leaf transpiration. This Arabidopsis thaliana (Mouse-ear cress) protein is CBL-interacting serine/threonine-protein kinase 23 (CIPK23).